The chain runs to 143 residues: MTEQNEELKKKLTPLQYEVTQNNGTEPPFRNEYYDLEAEGIYVDIVSGKPLFSSKDKYDAGCGWPSFTKPIDEEEVIEKEDRSHGMFRTEVRSKQADSHLGHVFPDGPGPNGLRYCINSAALRFIPKADLEKEGYGKYKALFD.

Positions 5 to 127 constitute a MsrB domain; the sequence is NEELKKKLTP…NSAALRFIPK (123 aa). The Nucleophile role is filled by Cys116.

Belongs to the MsrB Met sulfoxide reductase family.

The enzyme catalyses L-methionyl-[protein] + [thioredoxin]-disulfide + H2O = L-methionyl-(R)-S-oxide-[protein] + [thioredoxin]-dithiol. This Halalkalibacterium halodurans (strain ATCC BAA-125 / DSM 18197 / FERM 7344 / JCM 9153 / C-125) (Bacillus halodurans) protein is Peptide methionine sulfoxide reductase MsrB.